Reading from the N-terminus, the 29-residue chain is Trypsin inhibitor 5 (29 aa).

Intrachain disulfides connect Cys3/Cys20, Cys10/Cys22, and Cys16/Cys28.

Belongs to the protease inhibitor I7 (squash-type serine protease inhibitor) family.

The protein localises to the secreted. Strongly inhibits trypsin, weakly inhibits chymotrypsin. The polypeptide is Trypsin inhibitor 5 (Cyclanthera pedata (Achocha)).